The sequence spans 710 residues: Serine/threonine-protein phosphatase PP-Z2 (710 aa).

Positions 1 to 382 (MGNSGSKQHT…ADGDNGSRTN (382 aa)) are disordered. Gly2 carries the N-myristoyl glycine lipid modification. Over residues 15-27 (KKDDHDGDRKKTL) the composition is skewed to basic and acidic residues. The span at 40–49 (SLKSSRSLRS) shows a compositional bias: low complexity. 2 positions are modified to phosphoserine: Ser55 and Ser71. Composition is skewed to polar residues over residues 62–77 (NVQA…SSTL) and 95–104 (PNNHYLTSHP). 2 stretches are compositionally biased toward low complexity: residues 105–125 (SSSR…NNNS) and 143–155 (NSTS…SFNS). Positions 160 to 172 (LTDDDDDRGDDGG) are enriched in acidic residues. Thr161 is modified (phosphothreonine). Ser203 and Ser224 each carry phosphoserine. The segment covering 247 to 260 (SNRSNSHASSRKSS) has biased composition (low complexity). Over residues 261-273 (FGSTGNTAYSTPL) the composition is skewed to polar residues. Thr271 bears the Phosphothreonine mark. Ser275 is modified (phosphoserine). Polar residues predominate over residues 291-302 (DNVNGRGTSPIP). Position 310 is a phosphoserine (Ser310). The Mn(2+) site is built by Asp454, His456, Asp482, and Asn514. His515 functions as the Proton donor in the catalytic mechanism. Mn(2+) contacts are provided by His563 and His638.

The protein belongs to the PPP phosphatase family. PP-Z subfamily. The cofactor is Mn(2+).

It carries out the reaction O-phospho-L-seryl-[protein] + H2O = L-seryl-[protein] + phosphate. It catalyses the reaction O-phospho-L-threonyl-[protein] + H2O = L-threonyl-[protein] + phosphate. Functionally, essential for the maintenance of cell size and integrity in response to osmotic stress. The protein is Serine/threonine-protein phosphatase PP-Z2 (PPZ2) of Saccharomyces cerevisiae (strain ATCC 204508 / S288c) (Baker's yeast).